The sequence spans 114 residues: Probable 4-amino-4-deoxy-L-arabinose-phosphoundecaprenol flippase subunit ArnE (114 aa).

Helical transmembrane passes span 38-58 (LTLRWLAIAVVSLGLGMLLWL), 64-84 (LPLSVAYPMLSFNFVLVTLAA), and 94-114 (LRHWLGVAAIIFGILLMSWHL). Positions 43–112 (LAIAVVSLGL…IIFGILLMSW (70 aa)) constitute an EamA domain.

It belongs to the ArnE family. As to quaternary structure, heterodimer of ArnE and ArnF.

It is found in the cell inner membrane. It functions in the pathway bacterial outer membrane biogenesis; lipopolysaccharide biosynthesis. Functionally, translocates 4-amino-4-deoxy-L-arabinose-phosphoundecaprenol (alpha-L-Ara4N-phosphoundecaprenol) from the cytoplasmic to the periplasmic side of the inner membrane. The chain is Probable 4-amino-4-deoxy-L-arabinose-phosphoundecaprenol flippase subunit ArnE from Yersinia pseudotuberculosis serotype O:1b (strain IP 31758).